We begin with the raw amino-acid sequence, 218 residues long: Uracil-DNA glycosylase (218 aa).

The active-site Proton acceptor is the Asp68.

This sequence belongs to the uracil-DNA glycosylase (UDG) superfamily. UNG family. Homodimer. Interacts with protein OPG148. Component of the Uracil-DNA glycosylase(UDG)-OPG148-polymerase complex; OPG148 and UDG form a heterodimeric processivity factor that associates with OPG71 to form the processive polymerase holoenzyme.

The enzyme catalyses Hydrolyzes single-stranded DNA or mismatched double-stranded DNA and polynucleotides, releasing free uracil.. In terms of biological role, plays an essential role in viral replication as a component of the DNA polymerase processivity factor. Excises uracil residues from the DNA which can arise as a result of misincorporation of dUMP residues by DNA polymerase or due to deamination of cytosine. In Homo sapiens (Human), this protein is Uracil-DNA glycosylase (OPG116).